A 217-amino-acid chain; its full sequence is Small ribosomal subunit protein uS3 (217 aa).

Residues 38-106 enclose the KH type-2 domain; sequence IRKFVQKELA…QVHINIIEIK (69 aa).

Belongs to the universal ribosomal protein uS3 family. Part of the 30S ribosomal subunit. Forms a tight complex with proteins S10 and S14.

In terms of biological role, binds the lower part of the 30S subunit head. Binds mRNA in the 70S ribosome, positioning it for translation. The chain is Small ribosomal subunit protein uS3 from Streptococcus pneumoniae serotype 19F (strain G54).